The sequence spans 433 residues: Enolase (433 aa).

A (2R)-2-phosphoglycerate-binding site is contributed by glutamine 167. Glutamate 209 serves as the catalytic Proton donor. Aspartate 246, glutamate 291, and aspartate 318 together coordinate Mg(2+). Residues lysine 343, arginine 372, serine 373, and lysine 394 each contribute to the (2R)-2-phosphoglycerate site. Lysine 343 (proton acceptor) is an active-site residue.

Belongs to the enolase family. In terms of assembly, component of the RNA degradosome, a multiprotein complex involved in RNA processing and mRNA degradation. Mg(2+) is required as a cofactor.

Its subcellular location is the cytoplasm. It is found in the secreted. The protein localises to the cell surface. The enzyme catalyses (2R)-2-phosphoglycerate = phosphoenolpyruvate + H2O. The protein operates within carbohydrate degradation; glycolysis; pyruvate from D-glyceraldehyde 3-phosphate: step 4/5. Catalyzes the reversible conversion of 2-phosphoglycerate (2-PG) into phosphoenolpyruvate (PEP). It is essential for the degradation of carbohydrates via glycolysis. This is Enolase from Aeromonas hydrophila subsp. hydrophila (strain ATCC 7966 / DSM 30187 / BCRC 13018 / CCUG 14551 / JCM 1027 / KCTC 2358 / NCIMB 9240 / NCTC 8049).